The following is a 131-amino-acid chain: Fumarate reductase subunit C (131 aa).

2 helical membrane passes run 60–80 and 110–130; these read FVGFLQNPVVLILNLIVLAAA and IKGLWAVTAVVTAVVLFVALF.

Belongs to the FrdC family. In terms of assembly, part of an enzyme complex containing four subunits: a flavoprotein (FrdA), an iron-sulfur protein (FrdB), and two hydrophobic anchor proteins (FrdC and FrdD).

It localises to the cell inner membrane. Two distinct, membrane-bound, FAD-containing enzymes are responsible for the catalysis of fumarate and succinate interconversion; fumarate reductase is used in anaerobic growth, and succinate dehydrogenase is used in aerobic growth. Anchors the catalytic components of the fumarate reductase complex to the cell inner membrane, binds quinones. This Enterobacter sp. (strain 638) protein is Fumarate reductase subunit C.